Reading from the N-terminus, the 101-residue chain is Urease subunit beta (101 aa).

Belongs to the urease beta subunit family. Heterotrimer of UreA (gamma), UreB (beta) and UreC (alpha) subunits. Three heterotrimers associate to form the active enzyme.

It is found in the cytoplasm. The enzyme catalyses urea + 2 H2O + H(+) = hydrogencarbonate + 2 NH4(+). Its pathway is nitrogen metabolism; urea degradation; CO(2) and NH(3) from urea (urease route): step 1/1. In Bradyrhizobium diazoefficiens (strain JCM 10833 / BCRC 13528 / IAM 13628 / NBRC 14792 / USDA 110), this protein is Urease subunit beta.